A 348-amino-acid polypeptide reads, in one-letter code: tRNA N6-adenosine threonylcarbamoyltransferase (348 aa).

Fe cation contacts are provided by His111 and His115. Residues 134-138 (LISGG), Asp167, Gly180, and Asn277 each bind substrate. Asp305 provides a ligand contact to Fe cation.

It belongs to the KAE1 / TsaD family. Requires Fe(2+) as cofactor.

Its subcellular location is the cytoplasm. The enzyme catalyses L-threonylcarbamoyladenylate + adenosine(37) in tRNA = N(6)-L-threonylcarbamoyladenosine(37) in tRNA + AMP + H(+). Required for the formation of a threonylcarbamoyl group on adenosine at position 37 (t(6)A37) in tRNAs that read codons beginning with adenine. Is involved in the transfer of the threonylcarbamoyl moiety of threonylcarbamoyl-AMP (TC-AMP) to the N6 group of A37, together with TsaE and TsaB. TsaD likely plays a direct catalytic role in this reaction. The protein is tRNA N6-adenosine threonylcarbamoyltransferase of Haemophilus ducreyi (strain 35000HP / ATCC 700724).